Reading from the N-terminus, the 234-residue chain is MLRFSDVKYRYYTDLFEFDLNVEQGSVVAILGPSGAGKSTLLSLLAGFIEPESGDITINNESQLSLAPHQRPLSMLFQEHNLFAHLSVAENIGLGIKPNLRLNEKDKKRINDAARQVGVDDLLQRLPEQLSGGQKQRVALARCLVQQKPVLLLDEPFSALDPILREEMIVLIQALIKSEKLTVLMVTHSLQDAKALASHYAFICQQKVLSQGRISELFTQEKPPELTQYLQAVK.

An ABC transporter domain is found at 2 to 230 (LRFSDVKYRY…EKPPELTQYL (229 aa)). ATP is bound at residue 32 to 39 (GPSGAGKS).

It belongs to the ABC transporter superfamily. Thiamine importer (TC 3.A.1.19.1) family. In terms of assembly, the complex is composed of two ATP-binding proteins (ThiQ), two transmembrane proteins (ThiP) and a solute-binding protein (ThiB).

The protein localises to the cell inner membrane. The catalysed reaction is thiamine(out) + ATP + H2O = thiamine(in) + ADP + phosphate + H(+). Functionally, part of the ABC transporter complex ThiBPQ involved in thiamine import. Responsible for energy coupling to the transport system. This is Thiamine import ATP-binding protein ThiQ from Aliivibrio fischeri (strain ATCC 700601 / ES114) (Vibrio fischeri).